Here is a 120-residue protein sequence, read N- to C-terminus: MIF-like protein mif-2 (120 aa).

The protein belongs to the MIF family.

The sequence is that of MIF-like protein mif-2 (mif-2) from Caenorhabditis elegans.